The primary structure comprises 148 residues: 3-hydroxyacyl-[acyl-carrier-protein] dehydratase FabZ (148 aa).

His-55 is a catalytic residue.

Belongs to the thioester dehydratase family. FabZ subfamily.

The protein localises to the cytoplasm. It carries out the reaction a (3R)-hydroxyacyl-[ACP] = a (2E)-enoyl-[ACP] + H2O. In terms of biological role, involved in unsaturated fatty acids biosynthesis. Catalyzes the dehydration of short chain beta-hydroxyacyl-ACPs and long chain saturated and unsaturated beta-hydroxyacyl-ACPs. The polypeptide is 3-hydroxyacyl-[acyl-carrier-protein] dehydratase FabZ (Haemophilus influenzae (strain 86-028NP)).